Here is a 346-residue protein sequence, read N- to C-terminus: fMet-Leu-Phe receptor (346 aa).

N-linked (GlcNAc...) asparagine glycosylation is found at Asn-1 and Asn-7. The Extracellular segment spans residues 1–24 (NSSLPTNISGGTPAVSAGYLFLDI). A helical membrane pass occupies residues 25 to 47 (ITYLVFAVTFVLGVLGNGLVIWV). At 48–58 (AGFRMTHTVTT) the chain is on the cytoplasmic side. A helical membrane pass occupies residues 59 to 80 (ISYLNLAVADFCFTSTLPFFMV). Residues 81-97 (RKAMGGHWPFGWFLCKF) lie on the Extracellular side of the membrane. A disulfide bridge links Cys-95 with Cys-173. The chain crosses the membrane as a helical span at residues 98 to 118 (IFTIVDINLFGSVFLIALIAL). The Cytoplasmic portion of the chain corresponds to 119–137 (DRCVCVLHPVWTQNHRTVS). The helical transmembrane segment at 138 to 159 (LAKKVIIGPWVMALLLTLPVII) threads the bilayer. At 160-202 (RVTTVPGKTGTVACTFNFSPWTNDPKERINVAIAMLTVRGIIR) the chain is on the extracellular side. A helical transmembrane segment spans residues 203 to 223 (FIIGFSAPMSIVAVSYGLIAT). Topologically, residues 224-239 (KIHKQGLIKFSRPLRV) are cytoplasmic. The helical transmembrane segment at 240 to 263 (LSFVAAAFFLCWSPYQVVALIATV) threads the bilayer. Topologically, residues 264–282 (RIRELLQGMYKEIGIAVDV) are extracellular. The chain crosses the membrane as a helical span at residues 283–302 (TSALAFFNSCLNPMLYVFMG). Topologically, residues 303–346 (QDFRERLIHALPASLERALTEDSTQTSDTATNSTLPSAEVALQA) are cytoplasmic. Residues 322-346 (TEDSTQTSDTATNSTLPSAEVALQA) form a disordered region. Residues 323 to 338 (EDSTQTSDTATNSTLP) are compositionally biased toward polar residues.

The protein belongs to the G-protein coupled receptor 1 family. In terms of processing, phosphorylated; which is necessary for desensitization.

It localises to the cell membrane. In terms of biological role, high affinity receptor for N-formyl-methionyl peptides (fMLP), which are powerful neutrophil chemotactic factors. Binding of fMLP to the receptor stimulates intracellular calcium mobilization and superoxide anion release. This response is mediated via a G-protein that activates a phosphatidylinositol-calcium second messenger system. Receptor for TAFA4, mediates its effects on chemoattracting macrophages, promoting phagocytosis and increasing ROS release. Receptor for cathepsin CTSG, leading to increased phagocyte chemotaxis. This chain is fMet-Leu-Phe receptor (FPR1), found in Pan troglodytes (Chimpanzee).